The following is a 249-amino-acid chain: DNA repair protein RecO (249 aa).

It belongs to the RecO family.

Functionally, involved in DNA repair and RecF pathway recombination. This Lactobacillus delbrueckii subsp. bulgaricus (strain ATCC 11842 / DSM 20081 / BCRC 10696 / JCM 1002 / NBRC 13953 / NCIMB 11778 / NCTC 12712 / WDCM 00102 / Lb 14) protein is DNA repair protein RecO.